The following is a 333-amino-acid chain: N-acetyl-gamma-glutamyl-phosphate reductase (333 aa).

Cys145 is an active-site residue.

It belongs to the NAGSA dehydrogenase family. Type 1 subfamily.

Its subcellular location is the cytoplasm. It carries out the reaction N-acetyl-L-glutamate 5-semialdehyde + phosphate + NADP(+) = N-acetyl-L-glutamyl 5-phosphate + NADPH + H(+). Its pathway is amino-acid biosynthesis; L-arginine biosynthesis; N(2)-acetyl-L-ornithine from L-glutamate: step 3/4. In terms of biological role, catalyzes the NADPH-dependent reduction of N-acetyl-5-glutamyl phosphate to yield N-acetyl-L-glutamate 5-semialdehyde. The chain is N-acetyl-gamma-glutamyl-phosphate reductase from Salinispora tropica (strain ATCC BAA-916 / DSM 44818 / JCM 13857 / NBRC 105044 / CNB-440).